We begin with the raw amino-acid sequence, 309 residues long: Protein FdhE (309 aa).

This sequence belongs to the FdhE family.

It is found in the cytoplasm. Its function is as follows. Necessary for formate dehydrogenase activity. The sequence is that of Protein FdhE from Escherichia coli (strain SMS-3-5 / SECEC).